We begin with the raw amino-acid sequence, 768 residues long: Post-transcriptional regulator MKT1 (768 aa).

It belongs to the XPG/RAD2 endonuclease family. Interacts with PBP1.

Its subcellular location is the cytoplasm. The protein resides in the cytosol. Functionally, involved in 3'-UTR mediated RNA regulation. Complexes with PBP1 to promote mRNA interactions with poly(A)-binding protein. The polypeptide is Post-transcriptional regulator MKT1 (Cryptococcus neoformans var. grubii serotype A (strain H99 / ATCC 208821 / CBS 10515 / FGSC 9487) (Filobasidiella neoformans var. grubii)).